Consider the following 89-residue polypeptide: Small ribosomal subunit protein uS14 (89 aa).

This sequence belongs to the universal ribosomal protein uS14 family. In terms of assembly, part of the 30S ribosomal subunit. Contacts proteins S3 and S10.

Binds 16S rRNA, required for the assembly of 30S particles and may also be responsible for determining the conformation of the 16S rRNA at the A site. In Phytoplasma australiense, this protein is Small ribosomal subunit protein uS14.